Consider the following 308-residue polypeptide: tRNA uridine(34) hydroxylase (308 aa).

The region spanning 129 to 223 is the Rhodanese domain; that stretch reads QEKDVLILDA…YGKHPETQGV (95 aa). Cysteine 183 (cysteine persulfide intermediate) is an active-site residue.

Belongs to the TrhO family.

The catalysed reaction is uridine(34) in tRNA + AH2 + O2 = 5-hydroxyuridine(34) in tRNA + A + H2O. In terms of biological role, catalyzes oxygen-dependent 5-hydroxyuridine (ho5U) modification at position 34 in tRNAs. The sequence is that of tRNA uridine(34) hydroxylase from Aster yellows witches'-broom phytoplasma (strain AYWB).